A 402-amino-acid chain; its full sequence is Probable glutamate 5-kinase (402 aa).

Residues Ser58, Asp145, and Asn157 each coordinate substrate. ATP is bound by residues 177-178 (TD) and 218-224 (TGGMKTK). The PUA domain maps to 295–373 (HGSLEIDRGA…KEIASILGYN (79 aa)).

The protein belongs to the glutamate 5-kinase family.

The protein resides in the cytoplasm. The catalysed reaction is L-glutamate + ATP = L-glutamyl 5-phosphate + ADP. It participates in amino-acid biosynthesis; L-proline biosynthesis; L-glutamate 5-semialdehyde from L-glutamate: step 1/2. Its function is as follows. Catalyzes the transfer of a phosphate group to glutamate to form glutamate 5-phosphate which rapidly cyclizes to 5-oxoproline. The protein is Probable glutamate 5-kinase of Schizosaccharomyces pombe (strain 972 / ATCC 24843) (Fission yeast).